Reading from the N-terminus, the 449-residue chain is Adenylosuccinate synthetase isozyme 1 B (449 aa).

Residues 34–40 (GDEGKGK) and 62–64 (GHT) contribute to the GTP site. Asp-35 (proton acceptor) is an active-site residue. Asp-35 and Gly-62 together coordinate Mg(2+). Asp-35 is a binding site for substrate. Residues 35–38 (DEGK), 60–63 (NAGH), Thr-155, Arg-169, Asn-248, Thr-263, and Arg-327 contribute to the IMP site. His-63 (proton donor) is an active-site residue. Residue 323–329 (VTTGRKR) coordinates substrate. GTP-binding positions include Arg-329, 355-357 (KLD), and 437-440 (GVGK).

It belongs to the adenylosuccinate synthetase family. As to quaternary structure, homodimer. Requires Mg(2+) as cofactor.

It is found in the cytoplasm. It carries out the reaction IMP + L-aspartate + GTP = N(6)-(1,2-dicarboxyethyl)-AMP + GDP + phosphate + 2 H(+). It functions in the pathway purine metabolism; AMP biosynthesis via de novo pathway; AMP from IMP: step 1/2. Component of the purine nucleotide cycle (PNC), which interconverts IMP and AMP to regulate the nucleotide levels in various tissues, and which contributes to glycolysis and ammoniagenesis. Catalyzes the first committed step in the biosynthesis of AMP from IMP. The polypeptide is Adenylosuccinate synthetase isozyme 1 B (adss1b) (Salmo salar (Atlantic salmon)).